Reading from the N-terminus, the 256-residue chain is Trypsin CFT-1 (256 aa).

The signal sequence occupies residues 1 to 17 (MRVTLALVALCLASVAA). Positions 18–24 (LPEKQQR) are cleaved as a propeptide — activation peptide. The Peptidase S1 domain maps to 25–256 (IVGGSVTTIE…RFTAWIQANA (232 aa)). Residues cysteine 55 and cysteine 71 are joined by a disulfide bond. Residues histidine 70 and aspartate 115 each act as charge relay system in the active site. Disulfide bonds link cysteine 180/cysteine 197 and cysteine 209/cysteine 233. The active-site Charge relay system is the serine 213.

It belongs to the peptidase S1 family.

Its subcellular location is the secreted. It localises to the extracellular space. The enzyme catalyses Preferential cleavage: Arg-|-Xaa, Lys-|-Xaa.. Functionally, responsible for the activation of delta-endotoxin from Bacillus thuringiensis. The sequence is that of Trypsin CFT-1 from Choristoneura fumiferana (Spruce budworm moth).